The sequence spans 607 residues: Arginine decarboxylase (607 aa).

Position 104 is an N6-(pyridoxal phosphate)lysine (lysine 104). Position 290–300 (290–300 (LDCGGGLGVDY)) interacts with substrate.

Belongs to the Orn/Lys/Arg decarboxylase class-II family. SpeA subfamily. Pyridoxal 5'-phosphate serves as cofactor. The cofactor is Mg(2+).

It catalyses the reaction L-arginine + H(+) = agmatine + CO2. It functions in the pathway amine and polyamine biosynthesis; agmatine biosynthesis; agmatine from L-arginine: step 1/1. The chain is Arginine decarboxylase (SPE1) from Avena sativa (Oat).